The chain runs to 162 residues: UPF0114 protein Sfri_3655 (162 aa).

3 helical membrane-spanning segments follow: residues 15-35 (IMAP…IKFF), 53-73 (LVLI…LIMV), and 136-156 (IMWY…MGYL).

It belongs to the UPF0114 family.

It is found in the cell membrane. The polypeptide is UPF0114 protein Sfri_3655 (Shewanella frigidimarina (strain NCIMB 400)).